A 275-amino-acid chain; its full sequence is uncharacterized protein (275 aa).

3 helical membrane-spanning segments follow: residues 15 to 35, 39 to 59, and 70 to 90; these read LFLPLLGGSVSGSLFGRFLGS, AIMITTCVSFCALVVFIFGLF, and ILYLFLVGFVLSLIRIKVVYL. Positions 140–191 are disordered; the sequence is SSKTDMDSQVAEAPQTEEGEPSVNQVPQEAGASHRVGPYQDQGLATDRNGNP.

Its subcellular location is the mitochondrion membrane. This is an uncharacterized protein from Arabidopsis thaliana (Mouse-ear cress).